The chain runs to 461 residues: D-phenylhydantoinase (461 aa).

Residues His-59, His-61, and Lys-151 each contribute to the a divalent metal cation site. Lys-151 bears the N6-carboxylysine mark. Tyr-156 is a binding site for substrate. His-182 and His-239 together coordinate a divalent metal cation. Ser-286 contacts substrate. Residue Asp-313 coordinates a divalent metal cation. Asn-335 contacts substrate.

This sequence belongs to the metallo-dependent hydrolases superfamily. Hydantoinase/dihydropyrimidinase family. In terms of assembly, homotetramer. The cofactor is Zn(2+). It depends on Ni(2+) as a cofactor. Co(2+) serves as cofactor. Requires Mn(2+) as cofactor. Post-translationally, carboxylation allows a single lysine to coordinate two divalent metal cations.

The catalysed reaction is D-5-phenylhydantoin + H2O = N-carbamoyl-D-phenylglycine + H(+). Catalyzes the stereospecific hydrolysis of the cyclic amide bond of D-hydantoin derivatives with an aromatic side chains at the 5'-position. Has no activity on dihydropyrimidines. The physiological function is unknown. The sequence is that of D-phenylhydantoinase (hyuA) from Escherichia coli (strain K12).